A 388-amino-acid polypeptide reads, in one-letter code: Putative [LysW]-aminoadipate semialdehyde/glutamate semialdehyde transaminase (388 aa).

Pyridoxal 5'-phosphate-binding positions include 100–101 (GT) and Phe127. Arg130 provides a ligand contact to substrate. 211–214 (DEIQ) contacts pyridoxal 5'-phosphate. At Lys240 the chain carries N6-(pyridoxal phosphate)lysine. Ser268 contributes to the substrate binding site. Pyridoxal 5'-phosphate is bound at residue Thr269.

This sequence belongs to the class-III pyridoxal-phosphate-dependent aminotransferase family. LysJ subfamily. In terms of assembly, homodimer. Requires pyridoxal 5'-phosphate as cofactor.

The protein localises to the cytoplasm. It catalyses the reaction [amino-group carrier protein]-C-terminal-gamma-(L-lysyl)-L-glutamate + 2-oxoglutarate = [amino-group carrier protein]-C-terminal-N-(1-carboxy-5-oxopentan-1-yl)-L-glutamine + L-glutamate. It carries out the reaction [amino-group carrier protein]-C-terminal-gamma-(L-ornithyl)-L-glutamate + 2-oxoglutarate = [amino-group carrier protein]-C-terminal-gamma-(L-glutamyl-5-semialdehyde)-L-glutamate + L-glutamate. It functions in the pathway amino-acid biosynthesis; L-lysine biosynthesis via AAA pathway; L-lysine from L-alpha-aminoadipate (Thermus route): step 4/5. It participates in amino-acid biosynthesis; L-arginine biosynthesis. Functionally, involved in both the arginine and lysine biosynthetic pathways. This chain is Putative [LysW]-aminoadipate semialdehyde/glutamate semialdehyde transaminase, found in Aeropyrum pernix (strain ATCC 700893 / DSM 11879 / JCM 9820 / NBRC 100138 / K1).